The following is a 165-amino-acid chain: Nucleotide-binding protein Pro_0479 (165 aa).

Belongs to the YajQ family.

In terms of biological role, nucleotide-binding protein. This is Nucleotide-binding protein Pro_0479 from Prochlorococcus marinus (strain SARG / CCMP1375 / SS120).